We begin with the raw amino-acid sequence, 388 residues long: Cobalt-precorrin-5B C(1)-methyltransferase (388 aa).

Belongs to the CbiD family.

The enzyme catalyses Co-precorrin-5B + S-adenosyl-L-methionine = Co-precorrin-6A + S-adenosyl-L-homocysteine. The protein operates within cofactor biosynthesis; adenosylcobalamin biosynthesis; cob(II)yrinate a,c-diamide from sirohydrochlorin (anaerobic route): step 6/10. In terms of biological role, catalyzes the methylation of C-1 in cobalt-precorrin-5B to form cobalt-precorrin-6A. This chain is Cobalt-precorrin-5B C(1)-methyltransferase, found in Rubrobacter xylanophilus (strain DSM 9941 / JCM 11954 / NBRC 16129 / PRD-1).